A 399-amino-acid chain; its full sequence is GDP-D-glucose phosphorylase 1 (399 aa).

The active-site Tele-GMP-histidine intermediate is His-237.

The protein belongs to the GDPGP1 family.

Its subcellular location is the cytoplasm. It catalyses the reaction GDP-alpha-D-glucose + phosphate = alpha-D-glucose 1-phosphate + GDP + H(+). In terms of biological role, specific and highly efficient GDP-D-glucose phosphorylase regulating the levels of GDP-D-glucose in cells. This is GDP-D-glucose phosphorylase 1 (gdpgp1) from Xenopus laevis (African clawed frog).